Here is a 321-residue protein sequence, read N- to C-terminus: uncharacterized protein (321 aa).

The Proton donor role is filled by tyrosine 60. Histidine 118 is a binding site for substrate.

It belongs to the aldo/keto reductase family.

This is an uncharacterized protein from Schizosaccharomyces pombe (strain 972 / ATCC 24843) (Fission yeast).